The chain runs to 106 residues: uncharacterized protein (106 aa).

Its subcellular location is the mitochondrion. This is an uncharacterized protein from Arabidopsis thaliana (Mouse-ear cress).